The sequence spans 281 residues: MPTLQGTFWCFTLNFSGDAPSLSFNERVQYACWQHERVSHDHLQGYIQMKKRSTLKMMKELLPGAHLEVSKGTPEEASDYAMKEETRVAGPWTYGELLKKGSNKRKLLDRYKENPEDMELEDPAKARRCRAKIDKEKFIAEFKVEDDEQEWKKILEKEIEKIASPRSILWVYGPQGGEGKTSKAKELITRGWFYTRGGKKDDVAYSYVEDPTRHVVFDIPRDMQEYCNYSLIEMLKDRIIISNKYEPITNCQVYNIHVIVMANFLPDVTKISEDRIKIIYC.

Residues T3–L97 enclose the CRESS-DNA virus Rep endonuclease domain. The short motif at C10–L13 is the RCR-1 element. Residues E36 and H42 each coordinate a divalent metal cation. An RCR-2 motif is present at residues H42 to Q44. The Nuclear localization signal motif lies at K51–K71. The active-site For DNA cleavage activity is Y80. Residues Y80–K83 carry the RCR-3 motif. An a divalent metal cation-binding site is contributed by E85. A Nuclear localization signal motif is present at residues L97–N103. ATP is bound at residue G173–T181.

Belongs to the nanoviridea/circoviridae replication-associated protein family. In terms of assembly, homooligomer (Potential). Rep binds to repeated DNA motifs (iterons). The cofactor is Mg(2+). It depends on Mn(2+) as a cofactor.

It is found in the host nucleus. It carries out the reaction ATP + H2O = ADP + phosphate + H(+). Its function is as follows. Initiates and terminates the replication only of its own subviral DNA molecule. The closed circular ssDNA genome is first converted to a superhelical dsDNA. Rep binds a specific hairpin at the genome origin of replication. Introduces an endonucleolytic nick within the intergenic region of the genome, thereby initiating the rolling circle replication (RCR). Following cleavage, binds covalently to the 5'-phosphate of DNA as a tyrosyl ester. The cleavage gives rise to a free 3'-OH that serves as a primer for the cellular DNA polymerase. The polymerase synthesizes the (+) strand DNA by rolling circle mechanism. After one round of replication, a Rep-catalyzed nucleotidyl transfer reaction releases a circular single-stranded virus genome, thereby terminating the replication. Displays origin-specific DNA cleavage, nucleotidyl transferase, ATPase and helicase activities. This chain is Para-Rep C1 (C1), found in Milk vetch dwarf C1 alphasatellite (MVDC1A).